The sequence spans 198 residues: Protein GrpE (198 aa).

It belongs to the GrpE family. In terms of assembly, homodimer.

It is found in the cytoplasm. Functionally, participates actively in the response to hyperosmotic and heat shock by preventing the aggregation of stress-denatured proteins, in association with DnaK and GrpE. It is the nucleotide exchange factor for DnaK and may function as a thermosensor. Unfolded proteins bind initially to DnaJ; upon interaction with the DnaJ-bound protein, DnaK hydrolyzes its bound ATP, resulting in the formation of a stable complex. GrpE releases ADP from DnaK; ATP binding to DnaK triggers the release of the substrate protein, thus completing the reaction cycle. Several rounds of ATP-dependent interactions between DnaJ, DnaK and GrpE are required for fully efficient folding. The polypeptide is Protein GrpE (Vibrio harveyi (Beneckea harveyi)).